We begin with the raw amino-acid sequence, 354 residues long: MAKQAIKRAKILAVKNNNKIGVLLINLGTPDEPSVPAVRRYLRQFLSDPKVIDVPSLVRWIIVHLCILPFRPKRSAKLYQKIWMPEGSPLLVYSEMLRERVGETLGDDFCVALGMRYGKPSIETALKKLQEAQCRQLIVLPLFPQYSTSTTASALEGVRAKNSFKEMTVIDRFFEEPHYIDSMTTLIHENLNEFQPDYFLFSYHGLPERHLVKSGCQLAICNRKNNCSPISSSNENCYRAQCFETSRLIAKKLNLTDQQYGVAFQSRLGRAKWIEPYTDKYLIELSKKGIKKLMVVCPSFPVDCLETLEEIGIRAQSQWQRLGGETLKLIPSLNAHPQWVNAIAKMAKKSLQLF.

The Fe cation site is built by H204 and E306.

This sequence belongs to the ferrochelatase family.

It is found in the cytoplasm. The catalysed reaction is heme b + 2 H(+) = protoporphyrin IX + Fe(2+). Its pathway is porphyrin-containing compound metabolism; protoheme biosynthesis; protoheme from protoporphyrin-IX: step 1/1. In terms of biological role, catalyzes the ferrous insertion into protoporphyrin IX. The protein is Ferrochelatase of Coxiella burnetii (strain CbuG_Q212) (Coxiella burnetii (strain Q212)).